Consider the following 370-residue polypeptide: Queuine tRNA-ribosyltransferase (370 aa).

Asp89 serves as the catalytic Proton acceptor. Residues 89–93 (DSGGF), Asp143, Gln185, and Gly212 contribute to the substrate site. Positions 243 to 249 (GVGKPED) are RNA binding. Asp262 (nucleophile) is an active-site residue. Residues 267 to 271 (TRNAR) form an RNA binding; important for wobble base 34 recognition region. 4 residues coordinate Zn(2+): Cys300, Cys302, Cys305, and His331.

Belongs to the queuine tRNA-ribosyltransferase family. As to quaternary structure, homodimer. Within each dimer, one monomer is responsible for RNA recognition and catalysis, while the other monomer binds to the replacement base PreQ1. Zn(2+) serves as cofactor.

The enzyme catalyses 7-aminomethyl-7-carbaguanine + guanosine(34) in tRNA = 7-aminomethyl-7-carbaguanosine(34) in tRNA + guanine. Its pathway is tRNA modification; tRNA-queuosine biosynthesis. In terms of biological role, catalyzes the base-exchange of a guanine (G) residue with the queuine precursor 7-aminomethyl-7-deazaguanine (PreQ1) at position 34 (anticodon wobble position) in tRNAs with GU(N) anticodons (tRNA-Asp, -Asn, -His and -Tyr). Catalysis occurs through a double-displacement mechanism. The nucleophile active site attacks the C1' of nucleotide 34 to detach the guanine base from the RNA, forming a covalent enzyme-RNA intermediate. The proton acceptor active site deprotonates the incoming PreQ1, allowing a nucleophilic attack on the C1' of the ribose to form the product. After dissociation, two additional enzymatic reactions on the tRNA convert PreQ1 to queuine (Q), resulting in the hypermodified nucleoside queuosine (7-(((4,5-cis-dihydroxy-2-cyclopenten-1-yl)amino)methyl)-7-deazaguanosine). The polypeptide is Queuine tRNA-ribosyltransferase (Hydrogenovibrio crunogenus (strain DSM 25203 / XCL-2) (Thiomicrospira crunogena)).